Consider the following 239-residue polypeptide: Dolichyldiphosphatase (239 aa).

Over 1–34 (MNSTAAAINPNPNVIPFDDTYILYDSHDFLSFLS) the chain is Lumenal. Residues 35 to 55 (AYFSLMPILVLAFYLSWFIIT) traverse the membrane as a helical segment. Over 56 to 131 (RELEACIVAF…KIYTSWKNLN (76 aa)) the chain is Cytoplasmic. The chain crosses the membrane as a helical span at residues 132–152 (FLEKCIFSGALALLSFCVCFS). Over 153 to 164 (RVYLHYHNLDQV) the chain is Lumenal. A helical transmembrane segment spans residues 165-185 (IVGFSVGALTGSLYFFIVGII). Residues 186–239 (RELGLINWFLKLRIVRLFYMTDSYNLAPLTLKENYEAYWKRINQRSFNDKSKRD) lie on the Cytoplasmic side of the membrane.

It belongs to the dolichyldiphosphatase family.

It localises to the endoplasmic reticulum membrane. It catalyses the reaction a di-trans,poly-cis-dolichyl diphosphate + H2O = a di-trans,poly-cis-dolichyl phosphate + phosphate + H(+). The protein operates within protein modification; protein glycosylation. Functionally, non-essential protein which is required for efficient N-glycosylation. Necessary for maintaining optimal levels of dolichol-linked oligosaccharides. Hydrolyzes dolichyl pyrophosphate at a very high rate and dolichyl monophosphate at a much lower rate. Does not act on phosphatidate. The protein is Dolichyldiphosphatase (CAX4) of Saccharomyces cerevisiae (strain ATCC 204508 / S288c) (Baker's yeast).